The chain runs to 248 residues: Probable transcriptional regulatory protein R02753 (248 aa).

It belongs to the TACO1 family.

Its subcellular location is the cytoplasm. This Rhizobium meliloti (strain 1021) (Ensifer meliloti) protein is Probable transcriptional regulatory protein R02753.